Here is a 101-residue protein sequence, read N- to C-terminus: Putative regulatory protein PrgT (101 aa).

Its function is as follows. Might be involved in the expression of prgA, but is not required for activation of the expression of prgB. The polypeptide is Putative regulatory protein PrgT (prgT) (Enterococcus faecalis (strain ATCC 47077 / OG1RF)).